Here is a 37-residue protein sequence, read N- to C-terminus: Large ribosomal subunit protein bL36 (37 aa).

Belongs to the bacterial ribosomal protein bL36 family.

The protein is Large ribosomal subunit protein bL36 of Nitratidesulfovibrio vulgaris (strain DSM 19637 / Miyazaki F) (Desulfovibrio vulgaris).